A 212-amino-acid chain; its full sequence is Uridine kinase (212 aa).

ATP is bound at residue 13–20; sequence GASASGKS.

This sequence belongs to the uridine kinase family.

It localises to the cytoplasm. It catalyses the reaction uridine + ATP = UMP + ADP + H(+). It carries out the reaction cytidine + ATP = CMP + ADP + H(+). The protein operates within pyrimidine metabolism; CTP biosynthesis via salvage pathway; CTP from cytidine: step 1/3. Its pathway is pyrimidine metabolism; UMP biosynthesis via salvage pathway; UMP from uridine: step 1/1. This Psychromonas ingrahamii (strain DSM 17664 / CCUG 51855 / 37) protein is Uridine kinase.